The chain runs to 280 residues: Bifunctional protein FolD (280 aa).

Residues 158-160, isoleucine 183, and isoleucine 222 contribute to the NADP(+) site; that span reads GES.

This sequence belongs to the tetrahydrofolate dehydrogenase/cyclohydrolase family. Homodimer.

The enzyme catalyses (6R)-5,10-methylene-5,6,7,8-tetrahydrofolate + NADP(+) = (6R)-5,10-methenyltetrahydrofolate + NADPH. It carries out the reaction (6R)-5,10-methenyltetrahydrofolate + H2O = (6R)-10-formyltetrahydrofolate + H(+). It functions in the pathway one-carbon metabolism; tetrahydrofolate interconversion. In terms of biological role, catalyzes the oxidation of 5,10-methylenetetrahydrofolate to 5,10-methenyltetrahydrofolate and then the hydrolysis of 5,10-methenyltetrahydrofolate to 10-formyltetrahydrofolate. This Mycoplasma mobile (strain ATCC 43663 / 163K / NCTC 11711) (Mesomycoplasma mobile) protein is Bifunctional protein FolD.